Here is a 44-residue protein sequence, read N- to C-terminus: DNA-directed RNA polymerase subunit Rpo12 (44 aa).

The Zn(2+) site is built by Cys-8, Cys-22, and Cys-25.

Belongs to the archaeal Rpo12/eukaryotic RPC10 RNA polymerase subunit family. In terms of assembly, part of the RNA polymerase complex. Zn(2+) serves as cofactor.

The protein resides in the cytoplasm. The enzyme catalyses RNA(n) + a ribonucleoside 5'-triphosphate = RNA(n+1) + diphosphate. DNA-dependent RNA polymerase (RNAP) catalyzes the transcription of DNA into RNA using the four ribonucleoside triphosphates as substrates. In Natronomonas pharaonis (strain ATCC 35678 / DSM 2160 / CIP 103997 / JCM 8858 / NBRC 14720 / NCIMB 2260 / Gabara) (Halobacterium pharaonis), this protein is DNA-directed RNA polymerase subunit Rpo12.